A 142-amino-acid chain; its full sequence is Large ribosomal subunit protein bL17 (142 aa).

This sequence belongs to the bacterial ribosomal protein bL17 family. Part of the 50S ribosomal subunit. Contacts protein L32.

The chain is Large ribosomal subunit protein bL17 from Wolbachia pipientis wMel.